We begin with the raw amino-acid sequence, 100 residues long: Apolipoprotein C-II (100 aa).

The N-terminal stretch at 1 to 22 is a signal peptide; the sequence is MGSRFLLALFLVLLVLGCEVQA. The segment at 66-74 is lipid binding; it reads SVDEKLRDM. A lipoprotein lipase cofactor region spans residues 78–100; the sequence is SSAAMTTYASIFTDQIFTLLKGE.

This sequence belongs to the apolipoprotein C2 family. In terms of processing, proapolipoprotein C-II is synthesized as a sialic acid containing glycoprotein which is subsequently desialylated prior to its proteolytic processing. Proapolipoprotein C-II, the major form found in plasma undergoes proteolytic cleavage of its N-terminal hexapeptide to generate the mature form apolipoprotein C-II, which occurs as the minor form in plasma.

The protein resides in the secreted. Component of chylomicrons, very low-density lipoproteins (VLDL), low-density lipoproteins (LDL), and high-density lipoproteins (HDL) in plasma. Plays an important role in lipoprotein metabolism as an activator of lipoprotein lipase. This Bramus lutescens (Transcaucasian mole vole) protein is Apolipoprotein C-II (APOC2).